The following is a 20-amino-acid chain: Manganese peroxidase H5 (20 aa).

It belongs to the peroxidase family. Ligninase subfamily.

The protein resides in the secreted. The enzyme catalyses 2 Mn(2+) + H2O2 + 2 H(+) = 2 Mn(3+) + 2 H2O. Functionally, catalyzes the oxidation of Mn(2+) to Mn(3+). The latter, acting as a diffusible redox mediator, is capable of oxidizing a variety of lignin compounds. The sequence is that of Manganese peroxidase H5 from Phanerodontia chrysosporium (White-rot fungus).